The chain runs to 864 residues: Disintegrin and metalloproteinase domain-containing protein 15 (864 aa).

An N-terminal signal peptide occupies residues Met-1 to Pro-17. Positions Arg-18–Met-45 are disordered. A propeptide spanning residues Arg-18 to Arg-207 is cleaved from the precursor. Over residues Gln-34–Met-45 the composition is skewed to polar residues. Positions His-177–His-184 match the Cysteine switch motif. Cys-179 serves as a coordination point for Zn(2+). Topologically, residues Asp-208–Thr-696 are extracellular. Residues Lys-214 to Gln-415 enclose the Peptidase M12B domain. Residue Asn-238 is glycosylated (N-linked (GlcNAc...) asparagine). 4 cysteine pairs are disulfide-bonded: Cys-324–Cys-410, Cys-366–Cys-394, Cys-368–Cys-377, and Cys-481–Cys-501. Position 349 (His-349) interacts with Zn(2+). Glu-350 is a catalytic residue. Zn(2+) contacts are provided by His-353 and His-359. Residues Asn-390 and Asn-393 are each glycosylated (N-linked (GlcNAc...) asparagine). The 88-residue stretch at Ser-422 to Asp-509 folds into the Disintegrin domain. Asn-607 and Asn-612 each carry an N-linked (GlcNAc...) asparagine glycan. 3 disulfides stabilise this stretch: Cys-658-Cys-668, Cys-662-Cys-674, and Cys-676-Cys-685. The EGF-like domain occupies Cys-658 to Met-686. The helical transmembrane segment at Thr-697–Trp-717 threads the bilayer. Tyr-716 and Tyr-736 each carry phosphotyrosine; by HCK and LCK. Residues His-718–Leu-864 lie on the Cytoplasmic side of the membrane. The interval Tyr-736–Leu-864 is disordered. The segment covering Ser-741–Pro-750 has biased composition (pro residues). Polar residues predominate over residues Arg-752–Ala-762. Composition is skewed to pro residues over residues Pro-768–Val-780 and Thr-814–Ala-825. 2 consecutive short sequence motifs (SH3-binding) follow at residues Pro-816–Pro-822 and Arg-851–Pro-857.

In terms of assembly, interacts specifically with Src family protein-tyrosine kinases (PTKs). Interacts with ITAGV-ITGB3 (vitronectin receptor). Interacts with SH3GL2 and SNX9; this interaction occurs preferentially with ADAM15 precursor, rather than the processed form, suggesting it occurs in a secretory pathway compartment prior to the medial Golgi. Interacts with ITAG9-ITGB1. Interacts with SH3PXD2A. Interacts with ITAGV-ITGB1. Interacts with GRB2, HCK, ITSN1, ITSN2, LYN, MAPK1, MAPK3, NCF1, NCK1, nephrocystin, PTK6, SNX33, LCK and SRC. Requires Zn(2+) as cofactor. Post-translationally, the precursor is cleaved by a furin endopeptidase. An additional membrane proximal site of cleavage affects a small percentage of the proteins and results in disulfide-linked fragments. The prodomain is apparently cleaved in several positions that are N-terminal of the furin cleavage site. May be partially sialylated. In terms of processing, phosphorylation increases association with PTKs. As to expression, expressed moderately in pericytes of retina. Expressed in testis and in spermatozoa from the caput, corpus, and cauda epididymis, as well as in non-capacitated and acrosome-reacted sperm (at protein level). Highly expressed in heart, brain, lung, and kidney. Expressed at lower levels in spleen, liver, testis and muscle.

The protein localises to the endomembrane system. Its subcellular location is the cell junction. It is found in the adherens junction. The protein resides in the cell projection. It localises to the cilium. The protein localises to the flagellum. Its subcellular location is the cytoplasmic vesicle. It is found in the secretory vesicle. The protein resides in the acrosome. In terms of biological role, active metalloproteinase with gelatinolytic and collagenolytic activity. Plays a role in the wound healing process. Mediates both heterotypic intraepithelial cell/T-cell interactions and homotypic T-cell aggregation. Inhibits beta-1 integrin-mediated cell adhesion and migration of airway smooth muscle cells. Suppresses cell motility on or towards fibronectin possibly by driving alpha-v/beta-1 integrin (ITAGV-ITGB1) cell surface expression via ERK1/2 inactivation. Cleaves E-cadherin in response to growth factor deprivation. Plays a role in glomerular cell migration. Plays a role in pathological neovascularization. May play a role in cartilage remodeling. May be proteolytically processed, during sperm epididymal maturation and the acrosome reaction. May play a role in sperm-egg binding through its disintegrin domain. Interactions with egg membrane could be mediated via binding between the disintegrin-like domain to one or more integrin receptors on the egg. In Mus musculus (Mouse), this protein is Disintegrin and metalloproteinase domain-containing protein 15 (Adam15).